We begin with the raw amino-acid sequence, 272 residues long: DNA repair protein RecO (272 aa).

The protein belongs to the RecO family.

Involved in DNA repair and RecF pathway recombination. This is DNA repair protein RecO from Limosilactobacillus fermentum (strain NBRC 3956 / LMG 18251) (Lactobacillus fermentum).